The following is a 256-amino-acid chain: Stanniocalcin (256 aa).

The first 18 residues, 1–18 (MLAKFGLCAVFLVLGTAA), serve as a signal peptide directing secretion. The propeptide occupies 19–33 (TFDTDPEEASPRRAR). Residue N62 is glycosylated (N-linked (GlcNAc...) asparagine).

This sequence belongs to the stanniocalcin family. In terms of assembly, homodimer; disulfide-linked. Produced and secreted by the corpuscles of Stannius.

It localises to the secreted. Functionally, its primary function is the prevention of hypercalcemia. Upon release into the circulation, it lowers calcium transport by the gills, thereby reducing its rate of influx from the environment into the extracellular compartment. STC also stimulates phosphate reabsorption by renal proximal tubules. The consequence of this action is increased levels of plasma phosphate, which combines with excess calcium and promotes its disposal into bone and scales. In Oncorhynchus kisutch (Coho salmon), this protein is Stanniocalcin (stc).